Here is an 84-residue protein sequence, read N- to C-terminus: Beta-toxin Ct16 (84 aa).

The signal sequence occupies residues 1–19 (MNYFILLFVATFLLLDVNC). The LCN-type CS-alpha/beta domain maps to 21–80 (KDGYPVDANNCKFECWKNEYCDELCKAKRAESGYCYKLKLSCWCEGLPDDEPTKTSDRCY). 4 cysteine pairs are disulfide-bonded: cysteine 31–cysteine 79, cysteine 35–cysteine 55, cysteine 41–cysteine 62, and cysteine 45–cysteine 64. Threonine 82 bears the Threonine amide mark.

This sequence belongs to the long (4 C-C) scorpion toxin superfamily. Sodium channel inhibitor family. Alpha subfamily. As to expression, expressed by the venom gland.

The protein resides in the secreted. Its function is as follows. Alpha toxins bind voltage-independently at site-3 of sodium channels (Nav) and inhibit the inactivation of the activated channels, thereby blocking neuronal transmission. Is possibly toxic to mice. This Centruroides tecomanus (Scorpion) protein is Beta-toxin Ct16.